A 450-amino-acid chain; its full sequence is Glucose-6-phosphate isomerase (450 aa).

Thr39 is modified (phosphothreonine). Glu291 serves as the catalytic Proton donor. Catalysis depends on residues His312 and Lys426.

The protein belongs to the GPI family.

The protein localises to the cytoplasm. The catalysed reaction is alpha-D-glucose 6-phosphate = beta-D-fructose 6-phosphate. The protein operates within carbohydrate biosynthesis; gluconeogenesis. Its pathway is carbohydrate degradation; glycolysis; D-glyceraldehyde 3-phosphate and glycerone phosphate from D-glucose: step 2/4. Functionally, catalyzes the reversible isomerization of glucose-6-phosphate to fructose-6-phosphate. This chain is Glucose-6-phosphate isomerase, found in Halalkalibacterium halodurans (strain ATCC BAA-125 / DSM 18197 / FERM 7344 / JCM 9153 / C-125) (Bacillus halodurans).